Here is a 169-residue protein sequence, read N- to C-terminus: Peptide deformylase 1 (169 aa).

Residues C93 and H135 each contribute to the Fe cation site. The active site involves E136. H139 is a binding site for Fe cation.

It belongs to the polypeptide deformylase family. Fe(2+) is required as a cofactor.

The catalysed reaction is N-terminal N-formyl-L-methionyl-[peptide] + H2O = N-terminal L-methionyl-[peptide] + formate. In terms of biological role, removes the formyl group from the N-terminal Met of newly synthesized proteins. Requires at least a dipeptide for an efficient rate of reaction. N-terminal L-methionine is a prerequisite for activity but the enzyme has broad specificity at other positions. The sequence is that of Peptide deformylase 1 from Corynebacterium glutamicum (strain ATCC 13032 / DSM 20300 / JCM 1318 / BCRC 11384 / CCUG 27702 / LMG 3730 / NBRC 12168 / NCIMB 10025 / NRRL B-2784 / 534).